The following is a 60-amino-acid chain: Large ribosomal subunit protein uL30 (60 aa).

Belongs to the universal ribosomal protein uL30 family. In terms of assembly, part of the 50S ribosomal subunit.

This Amoebophilus asiaticus (strain 5a2) protein is Large ribosomal subunit protein uL30.